We begin with the raw amino-acid sequence, 519 residues long: Laccase-2 (519 aa).

A signal peptide spans 1 to 20 (MGLQRFSFFVTLALVARSLA). Plastocyanin-like domains are found at residues 22–147 (IGPV…FVVY) and 159–301 (VDNE…ILRY). N-linked (GlcNAc...) asparagine glycosylation occurs at asparagine 74. 4 residues coordinate Cu cation: histidine 84, histidine 86, histidine 129, and histidine 131. 2 disulfides stabilise this stretch: cysteine 105-cysteine 508 and cysteine 137-cysteine 225. 6 N-linked (GlcNAc...) asparagine glycosylation sites follow: asparagine 161, asparagine 228, asparagine 237, asparagine 271, asparagine 353, and asparagine 361. Residues 368–490 (TVPVLLQILS…AGFAIVFAED (123 aa)) enclose the Plastocyanin-like 3 domain. Residues histidine 415, histidine 418, and histidine 420 each contribute to the Cu cation site. Residue asparagine 456 is glycosylated (N-linked (GlcNAc...) asparagine). Residues histidine 472, cysteine 473, histidine 474, and histidine 478 each contribute to the Cu cation site.

This sequence belongs to the multicopper oxidase family. Cu cation serves as cofactor.

The protein resides in the secreted. It catalyses the reaction 4 hydroquinone + O2 = 4 benzosemiquinone + 2 H2O. Functionally, lignin degradation and detoxification of lignin-derived products. The polypeptide is Laccase-2 (LCC2) (Trametes versicolor (White-rot fungus)).